We begin with the raw amino-acid sequence, 178 residues long: Fatty-acid and retinol-binding protein 1 (178 aa).

Positions Met-1–Ala-16 are cleaved as a signal peptide. N-linked (GlcNAc...) asparagine glycans are attached at residues Asn-44 and Asn-75. Coiled-coil stretches lie at residues Asp-67 to Asn-89 and Lys-123 to Ala-153. Asn-157 carries N-linked (GlcNAc...) asparagine glycosylation.

This sequence belongs to the fatty-acid and retinol-binding protein (FARBP) family. Post-translationally, N-glycosylated.

The protein localises to the secreted. Functionally, binds retinol and different fatty acids. The protein is Fatty-acid and retinol-binding protein 1 of Acanthocheilonema viteae (Filarial nematode worm).